We begin with the raw amino-acid sequence, 155 residues long: MPRMIEGTLSAEGKRFGIIVARFNDFISDRLLGGALDALMRSGAADENIEVAKVPGAFEIPLIADKMAKSGKYDALICLGAVIRGSTPHFDYVCAEASKGIAHVSLGAGIPVMFGILTTDTIEQAIERAGTKAGNKGWDVAMGAIEMVNLAEQFK.

Residues Phe23, 57–59, and 81–83 contribute to the 5-amino-6-(D-ribitylamino)uracil site; these read AFE and AVI. (2S)-2-hydroxy-3-oxobutyl phosphate is bound at residue 86–87; the sequence is ST. Residue His89 is the Proton donor of the active site. Phe114 contacts 5-amino-6-(D-ribitylamino)uracil. (2S)-2-hydroxy-3-oxobutyl phosphate is bound at residue Arg128.

It belongs to the DMRL synthase family.

It carries out the reaction (2S)-2-hydroxy-3-oxobutyl phosphate + 5-amino-6-(D-ribitylamino)uracil = 6,7-dimethyl-8-(1-D-ribityl)lumazine + phosphate + 2 H2O + H(+). The protein operates within cofactor biosynthesis; riboflavin biosynthesis; riboflavin from 2-hydroxy-3-oxobutyl phosphate and 5-amino-6-(D-ribitylamino)uracil: step 1/2. Catalyzes the formation of 6,7-dimethyl-8-ribityllumazine by condensation of 5-amino-6-(D-ribitylamino)uracil with 3,4-dihydroxy-2-butanone 4-phosphate. This is the penultimate step in the biosynthesis of riboflavin. The chain is 6,7-dimethyl-8-ribityllumazine synthase from Desulfatibacillum aliphaticivorans.